We begin with the raw amino-acid sequence, 217 residues long: Thiamine-phosphate synthase (217 aa).

Residues 42–46 (QYRDK) and D77 each bind 4-amino-2-methyl-5-(diphosphooxymethyl)pyrimidine. D78 and D97 together coordinate Mg(2+). S116 is a 4-amino-2-methyl-5-(diphosphooxymethyl)pyrimidine binding site. Residue 143–145 (TTS) participates in 2-[(2R,5Z)-2-carboxy-4-methylthiazol-5(2H)-ylidene]ethyl phosphate binding. K146 lines the 4-amino-2-methyl-5-(diphosphooxymethyl)pyrimidine pocket. Residues G174 and 194–195 (IS) contribute to the 2-[(2R,5Z)-2-carboxy-4-methylthiazol-5(2H)-ylidene]ethyl phosphate site.

The protein belongs to the thiamine-phosphate synthase family. Requires Mg(2+) as cofactor.

The catalysed reaction is 2-[(2R,5Z)-2-carboxy-4-methylthiazol-5(2H)-ylidene]ethyl phosphate + 4-amino-2-methyl-5-(diphosphooxymethyl)pyrimidine + 2 H(+) = thiamine phosphate + CO2 + diphosphate. The enzyme catalyses 2-(2-carboxy-4-methylthiazol-5-yl)ethyl phosphate + 4-amino-2-methyl-5-(diphosphooxymethyl)pyrimidine + 2 H(+) = thiamine phosphate + CO2 + diphosphate. It catalyses the reaction 4-methyl-5-(2-phosphooxyethyl)-thiazole + 4-amino-2-methyl-5-(diphosphooxymethyl)pyrimidine + H(+) = thiamine phosphate + diphosphate. Its pathway is cofactor biosynthesis; thiamine diphosphate biosynthesis; thiamine phosphate from 4-amino-2-methyl-5-diphosphomethylpyrimidine and 4-methyl-5-(2-phosphoethyl)-thiazole: step 1/1. In terms of biological role, condenses 4-methyl-5-(beta-hydroxyethyl)thiazole monophosphate (THZ-P) and 2-methyl-4-amino-5-hydroxymethyl pyrimidine pyrophosphate (HMP-PP) to form thiamine monophosphate (TMP). The protein is Thiamine-phosphate synthase of Lactiplantibacillus plantarum (strain ATCC BAA-793 / NCIMB 8826 / WCFS1) (Lactobacillus plantarum).